Here is a 218-residue protein sequence, read N- to C-terminus: Small ribosomal subunit protein uS3 (218 aa).

Residues 38 to 106 (LRSDLKKKLM…PVHLNIEEVK (69 aa)) enclose the KH type-2 domain.

It belongs to the universal ribosomal protein uS3 family. In terms of assembly, part of the 30S ribosomal subunit. Forms a tight complex with proteins S10 and S14.

Its function is as follows. Binds the lower part of the 30S subunit head. Binds mRNA in the 70S ribosome, positioning it for translation. This is Small ribosomal subunit protein uS3 from Legionella pneumophila (strain Lens).